The sequence spans 286 residues: Putative thiosulfate sulfurtransferase (286 aa).

Residues 27 to 134 form the Rhodanese 1 domain; it reads DDPAYRLVEV…WVDNDYPTTD (108 aa). Glycyl lysine isopeptide (Lys-Gly) (interchain with G-Cter in SAMP2) cross-links involve residues K162 and K166. One can recognise a Rhodanese 2 domain in the interval 164–283; the sequence is VDKGLPLVDV…WGNLVGAPVE (120 aa). C242 functions as the Cysteine persulfide intermediate in the catalytic mechanism. Substrate is bound at residue R247.

The enzyme catalyses thiosulfate + hydrogen cyanide = thiocyanate + sulfite + 2 H(+). May be a sulfotransferase involved in the formation of thiosulfate. This is Putative thiosulfate sulfurtransferase (tssA) from Haloferax volcanii (strain ATCC 29605 / DSM 3757 / JCM 8879 / NBRC 14742 / NCIMB 2012 / VKM B-1768 / DS2) (Halobacterium volcanii).